The primary structure comprises 372 residues: 3 beta-hydroxysteroid dehydrogenase/Delta 5--&gt;4-isomerase type 2 (372 aa).

Y154 acts as the Proton acceptor in catalysis. Residue K158 coordinates NAD(+). The chain crosses the membrane as a helical span at residues 287–307 (LTLMYWIGFLLEVVSFLLSPI).

Belongs to the 3-beta-HSD family. As to expression, expressed in adrenal gland, testis and ovary.

Its subcellular location is the endoplasmic reticulum membrane. It localises to the mitochondrion membrane. It carries out the reaction a 3beta-hydroxy-Delta(5)-steroid + NAD(+) = a 3-oxo-Delta(5)-steroid + NADH + H(+). The enzyme catalyses a 3-oxo-Delta(5)-steroid = a 3-oxo-Delta(4)-steroid. The catalysed reaction is pregnenolone + NAD(+) = pregn-5-ene-3,20-dione + NADH + H(+). It catalyses the reaction pregn-5-ene-3,20-dione = progesterone. It carries out the reaction 3beta-hydroxyandrost-5-en-17-one + NAD(+) = androst-5-ene-3,17-dione + NADH + H(+). The enzyme catalyses androst-5-ene-3,17-dione = androst-4-ene-3,17-dione. Its pathway is lipid metabolism; steroid biosynthesis. Its function is as follows. 3-beta-HSD is a bifunctional enzyme, that catalyzes the oxidative conversion of Delta(5)-ene-3-beta-hydroxy steroid, and the oxidative conversion of ketosteroids. The 3-beta-HSD enzymatic system plays a crucial role in the biosynthesis of all classes of hormonal steroids. This is 3 beta-hydroxysteroid dehydrogenase/Delta 5--&gt;4-isomerase type 2 from Homo sapiens (Human).